The sequence spans 546 residues: Chaperonin GroEL (546 aa).

ATP is bound by residues 29-32, K50, 86-90, G415, and D495; these read TLGP and DGTTT. The tract at residues 526 to 546 is disordered; it reads EDNAGGGGMPQGMGGGMPGMM. Over residues 529-546 the composition is skewed to gly residues; the sequence is AGGGGMPQGMGGGMPGMM.

The protein belongs to the chaperonin (HSP60) family. As to quaternary structure, forms a cylinder of 14 subunits composed of two heptameric rings stacked back-to-back. Interacts with the co-chaperonin GroES.

The protein resides in the cytoplasm. The enzyme catalyses ATP + H2O + a folded polypeptide = ADP + phosphate + an unfolded polypeptide.. Together with its co-chaperonin GroES, plays an essential role in assisting protein folding. The GroEL-GroES system forms a nano-cage that allows encapsulation of the non-native substrate proteins and provides a physical environment optimized to promote and accelerate protein folding. The sequence is that of Chaperonin GroEL from Christiangramia forsetii (strain DSM 17595 / CGMCC 1.15422 / KT0803) (Gramella forsetii).